The primary structure comprises 169 residues: Cell division inhibitor SulA (169 aa).

The segment at 106-112 (ALRTGNY) is ftsZ binding. Residues 162–169 (KIHSNLYH) form a lon protease binding region.

Belongs to the SulA family. In terms of assembly, interacts with FtsZ. Post-translationally, is rapidly cleaved and degraded by the Lon protease once DNA damage is repaired.

Component of the SOS system and an inhibitor of cell division. Accumulation of SulA causes rapid cessation of cell division and the appearance of long, non-septate filaments. In the presence of GTP, binds a polymerization-competent form of FtsZ in a 1:1 ratio, thus inhibiting FtsZ polymerization and therefore preventing it from participating in the assembly of the Z ring. This mechanism prevents the premature segregation of damaged DNA to daughter cells during cell division. The protein is Cell division inhibitor SulA of Salmonella arizonae (strain ATCC BAA-731 / CDC346-86 / RSK2980).